We begin with the raw amino-acid sequence, 297 residues long: Acetyl-coenzyme A carboxylase carboxyl transferase subunit beta (297 aa).

Positions 1-23 (MSWIERILGRTSSSSSSSKSKVP) are disordered. The 270-residue stretch at 26 to 295 (VWTKCTSCEQ…PFKTAELIVE (270 aa)) folds into the CoA carboxyltransferase N-terminal domain. Residues C30, C33, C49, and C52 each coordinate Zn(2+). The C4-type zinc finger occupies 30-52 (CTSCEQVLYSEELKRNMHVCPKC).

Belongs to the AccD/PCCB family. As to quaternary structure, acetyl-CoA carboxylase is a heterohexamer composed of biotin carboxyl carrier protein (AccB), biotin carboxylase (AccC) and two subunits each of ACCase subunit alpha (AccA) and ACCase subunit beta (AccD). Zn(2+) is required as a cofactor.

It localises to the cytoplasm. The enzyme catalyses N(6)-carboxybiotinyl-L-lysyl-[protein] + acetyl-CoA = N(6)-biotinyl-L-lysyl-[protein] + malonyl-CoA. Its pathway is lipid metabolism; malonyl-CoA biosynthesis; malonyl-CoA from acetyl-CoA: step 1/1. In terms of biological role, component of the acetyl coenzyme A carboxylase (ACC) complex. Biotin carboxylase (BC) catalyzes the carboxylation of biotin on its carrier protein (BCCP) and then the CO(2) group is transferred by the transcarboxylase to acetyl-CoA to form malonyl-CoA. The polypeptide is Acetyl-coenzyme A carboxylase carboxyl transferase subunit beta (Actinobacillus pleuropneumoniae serotype 7 (strain AP76)).